The sequence spans 404 residues: Caspase-1 (404 aa).

A CARD domain is found at 1-91 (MADKVLKDKR…HLAQTLGLSS (91 aa)). The propeptide occupies 1 to 119 (MADKVLKDKR…SLPAFVENMP (119 aa)). Catalysis depends on residues His237 and Cys285. Positions 298–316 (SPKASTDSWTHQPLMLQSD) are excised as a propeptide. A Phosphoserine modification is found at Ser302.

Belongs to the peptidase C14A family. Heterotetramer that consists of two anti-parallel arranged heterodimers, each one formed by a 20 kDa (Caspase-1 subunit p20) and a 10 kDa (Caspase-1 subunit p10) subunit. May be a component of the inflammasome, a protein complex which also includes PYCARD, CARD8 and NLRP2 and whose function would be the activation of pro-inflammatory caspases. Component of the AIM2 PANoptosome complex, a multiprotein complex that drives inflammatory cell death (PANoptosis). Both the p10 and p20 subunits interact with MEFV. Interacts with CARD17P/INCA and CARD18. Interacts with SERPINB1; this interaction regulates CASP1 activity. As to quaternary structure, heterotetramer that consists of two anti-parallel arranged heterodimers, each one formed by a 20 kDa (Caspase-1 subunit p20) and a 10 kDa (Caspase-1 subunit p10) subunit. Post-translationally, the two subunits are derived from the precursor sequence by an autocatalytic mechanism. In terms of processing, ubiquitinated via 'Lys-11'-linked polyubiquitination. Deubiquitinated by USP8.

Its subcellular location is the cytoplasm. The protein resides in the cell membrane. It carries out the reaction Strict requirement for an Asp residue at position P1 and has a preferred cleavage sequence of Tyr-Val-Ala-Asp-|-.. In terms of biological role, thiol protease involved in a variety of inflammatory processes by proteolytically cleaving other proteins, such as the precursors of the inflammatory cytokines interleukin-1 beta (IL1B) and interleukin 18 (IL18) as well as the pyroptosis inducer Gasdermin-D (GSDMD), into active mature peptides. Plays a key role in cell immunity as an inflammatory response initiator: once activated through formation of an inflammasome complex, it initiates a pro-inflammatory response through the cleavage of the two inflammatory cytokines IL1B and IL18, releasing the mature cytokines which are involved in a variety of inflammatory processes. Cleaves a tetrapeptide after an Asp residue at position P1. Also initiates pyroptosis, a programmed lytic cell death pathway, through cleavage of GSDMD. In contrast to cleavage of interleukin IL1B, recognition and cleavage of GSDMD is not strictly dependent on the consensus cleavage site but depends on an exosite interface on CASP1 that recognizes and binds the Gasdermin-D, C-terminal (GSDMD-CT) part. Cleaves and activates CASP7 in response to bacterial infection, promoting plasma membrane repair. Upon inflammasome activation, during DNA virus infection but not RNA virus challenge, controls antiviral immunity through the cleavage of CGAS, rendering it inactive. In apoptotic cells, cleaves SPHK2 which is released from cells and remains enzymatically active extracellularly. This Canis lupus familiaris (Dog) protein is Caspase-1 (CASP1).